Reading from the N-terminus, the 466-residue chain is Probable aminotransferase Rv3329 (466 aa).

Lys-294 carries the post-translational modification N6-(pyridoxal phosphate)lysine.

It belongs to the class-III pyridoxal-phosphate-dependent aminotransferase family. Pyridoxal 5'-phosphate is required as a cofactor.

Functionally, probable aminotransferase. The protein is Probable aminotransferase Rv3329 of Mycobacterium tuberculosis (strain ATCC 25618 / H37Rv).